A 264-amino-acid polypeptide reads, in one-letter code: E3 ubiquitin-protein ligase MARCHF8 (264 aa).

A disordered region spans residues 15-47 (LGHSVSRSSNISKAGSPTSVSAPSRFPRTSVTP). Over residues 16-47 (GHSVSRSSNISKAGSPTSVSAPSRFPRTSVTP) the composition is skewed to polar residues. The segment at 45 to 106 (VTPSSQDICR…ELCKFEFIME (62 aa)) adopts an RING-CH-type zinc-finger fold. C53, C56, C70, C72, H80, C83, C96, and C99 together coordinate Zn(2+). A run of 2 helical transmembrane segments spans residues 130-150 (CSVT…YVLI) and 170-190 (FWTK…FMYV).

The protein localises to the cytoplasmic vesicle membrane. It is found in the lysosome membrane. Its subcellular location is the early endosome membrane. The catalysed reaction is S-ubiquitinyl-[E2 ubiquitin-conjugating enzyme]-L-cysteine + [acceptor protein]-L-lysine = [E2 ubiquitin-conjugating enzyme]-L-cysteine + N(6)-ubiquitinyl-[acceptor protein]-L-lysine.. It participates in protein modification; protein ubiquitination. Functionally, E3 ubiquitin-protein ligase that mediates ubiquitination of cd86 and MHC class II proteins, such as hla-dr alpha and beta, and promotes their subsequent endocytosis and sorting to lysosomes via multivesicular bodies. This Xenopus laevis (African clawed frog) protein is E3 ubiquitin-protein ligase MARCHF8 (marchf8).